The primary structure comprises 291 residues: GTPase Era (291 aa).

The Era-type G domain maps to 2-167 (KSGFVSIIGR…LDEIVKYLDK (166 aa)). The tract at residues 10 to 17 (GRTNAGKS) is G1. A GTP-binding site is contributed by 10–17 (GRTNAGKS). Residues 36-40 (NATRR) form a G2 region. The tract at residues 57–60 (DTPG) is G3. GTP-binding positions include 57 to 61 (DTPGL) and 116 to 119 (NKVD). A G4 region spans residues 116-119 (NKVD). A G5 region spans residues 146–148 (YSS). One can recognise a KH type-2 domain in the interval 186–274 (YRDFILESIY…LLKLFVTVKK (89 aa)).

Belongs to the TRAFAC class TrmE-Era-EngA-EngB-Septin-like GTPase superfamily. Era GTPase family. As to quaternary structure, monomer.

The protein localises to the cytoplasm. The protein resides in the cell inner membrane. Functionally, an essential GTPase that binds both GDP and GTP, with rapid nucleotide exchange. Plays a role in 16S rRNA processing and 30S ribosomal subunit biogenesis and possibly also in cell cycle regulation and energy metabolism. In Campylobacter jejuni subsp. jejuni serotype O:6 (strain 81116 / NCTC 11828), this protein is GTPase Era.